Consider the following 351-residue polypeptide: 3-ketosteroid-9-alpha-monooxygenase, ferredoxin reductase component (351 aa).

An FAD-binding FR-type domain is found at 10–116 (SRSVILTVSA…LPPAGVFTPK (107 aa)). A 2Fe-2S ferredoxin-type domain is found at 264-351 (ATVEVELDGE…PVTDHLKIEF (88 aa)). [2Fe-2S] cluster contacts are provided by cysteine 300, cysteine 305, cysteine 308, and cysteine 338.

In terms of assembly, the two-component system 3-ketosteroid-9-alpha-monooxygenase is composed of an oxygenase component KshA and a reductase component KshB. Requires FAD as cofactor. It depends on [2Fe-2S] cluster as a cofactor.

The enzyme catalyses androsta-1,4-diene-3,17-dione + 2 reduced [2Fe-2S]-[ferredoxin] + O2 + 2 H(+) = 9alpha-hydroxyandrosta-1,4-diene-3,17-dione + 2 oxidized [2Fe-2S]-[ferredoxin] + H2O. The protein operates within steroid metabolism; cholesterol degradation. KSH activity is completely inhibited by zinc ions. KshB is specifically inhibited by Cu(2+) ions. Functionally, probably involved in the degradation of cholesterol. In vitro, catalyzes the introduction of a 9alpha-hydroxyl moiety into the ring B of 3-ketosteroid substrates such as 1,4-androstadiene-3,17-dione (ADD), 4-androstene-3,17-dione (AD), 4-androstene-17beta-ol-3-one (testosterone), 4-pregnene-3,20-dione (progesterone), 19-nor-4-androstene-3,17-dione (nordion), 1-(5alpha)-androstene-3,17-dione, 5alpha-androstane-3,17-dione and 5beta-androstane-3,17-dione. KSH has the highest activity with 3-keto-Delta4 steroid substrates. This is 3-ketosteroid-9-alpha-monooxygenase, ferredoxin reductase component from Rhodococcus rhodochrous.